The primary structure comprises 184 residues: Photosystem I assembly protein Ycf4 (184 aa).

A run of 2 helical transmembrane segments spans residues 22-42 (FCWAFILFFGSLGFLLVGTSS) and 57-77 (IVFFPQGIVMSFYGIAGLFIS).

This sequence belongs to the Ycf4 family.

Its subcellular location is the plastid. It is found in the chloroplast thylakoid membrane. Its function is as follows. Seems to be required for the assembly of the photosystem I complex. This Gossypium barbadense (Sea Island cotton) protein is Photosystem I assembly protein Ycf4.